The chain runs to 133 residues: Small ribosomal subunit protein uS8 (133 aa).

Belongs to the universal ribosomal protein uS8 family. In terms of assembly, part of the 30S ribosomal subunit. Contacts proteins S5 and S12.

In terms of biological role, one of the primary rRNA binding proteins, it binds directly to 16S rRNA central domain where it helps coordinate assembly of the platform of the 30S subunit. This is Small ribosomal subunit protein uS8 from Chlamydia trachomatis serovar A (strain ATCC VR-571B / DSM 19440 / HAR-13).